Consider the following 227-residue polypeptide: Cytochrome c oxidase subunit 2 (227 aa).

Topologically, residues 1 to 14 are mitochondrial intermembrane; that stretch reads MAYPMQLGFQDATS. A helical membrane pass occupies residues 15–45; that stretch reads PIMEELLHFHDHTLMIVFLISSLVLYIISLM. The Mitochondrial matrix segment spans residues 46-59; that stretch reads LTTKLTHTSTMDAQ. Residues 60–87 traverse the membrane as a helical segment; the sequence is EVETVWTILPAVILIMIALPSLRILYMM. Residues 88–227 are Mitochondrial intermembrane-facing; the sequence is DEINNPSLTV…HFEKWSASML (140 aa). Residues histidine 161, cysteine 196, glutamate 198, cysteine 200, histidine 204, and methionine 207 each coordinate Cu cation. A Mg(2+)-binding site is contributed by glutamate 198.

The protein belongs to the cytochrome c oxidase subunit 2 family. As to quaternary structure, component of the cytochrome c oxidase (complex IV, CIV), a multisubunit enzyme composed of 14 subunits. The complex is composed of a catalytic core of 3 subunits MT-CO1, MT-CO2 and MT-CO3, encoded in the mitochondrial DNA, and 11 supernumerary subunits COX4I, COX5A, COX5B, COX6A, COX6B, COX6C, COX7A, COX7B, COX7C, COX8 and NDUFA4, which are encoded in the nuclear genome. The complex exists as a monomer or a dimer and forms supercomplexes (SCs) in the inner mitochondrial membrane with NADH-ubiquinone oxidoreductase (complex I, CI) and ubiquinol-cytochrome c oxidoreductase (cytochrome b-c1 complex, complex III, CIII), resulting in different assemblies (supercomplex SCI(1)III(2)IV(1) and megacomplex MCI(2)III(2)IV(2)). Found in a complex with TMEM177, COA6, COX18, COX20, SCO1 and SCO2. Interacts with TMEM177 in a COX20-dependent manner. Interacts with COX20. Interacts with COX16. It depends on Cu cation as a cofactor.

The protein localises to the mitochondrion inner membrane. It catalyses the reaction 4 Fe(II)-[cytochrome c] + O2 + 8 H(+)(in) = 4 Fe(III)-[cytochrome c] + 2 H2O + 4 H(+)(out). In terms of biological role, component of the cytochrome c oxidase, the last enzyme in the mitochondrial electron transport chain which drives oxidative phosphorylation. The respiratory chain contains 3 multisubunit complexes succinate dehydrogenase (complex II, CII), ubiquinol-cytochrome c oxidoreductase (cytochrome b-c1 complex, complex III, CIII) and cytochrome c oxidase (complex IV, CIV), that cooperate to transfer electrons derived from NADH and succinate to molecular oxygen, creating an electrochemical gradient over the inner membrane that drives transmembrane transport and the ATP synthase. Cytochrome c oxidase is the component of the respiratory chain that catalyzes the reduction of oxygen to water. Electrons originating from reduced cytochrome c in the intermembrane space (IMS) are transferred via the dinuclear copper A center (CU(A)) of subunit 2 and heme A of subunit 1 to the active site in subunit 1, a binuclear center (BNC) formed by heme A3 and copper B (CU(B)). The BNC reduces molecular oxygen to 2 water molecules using 4 electrons from cytochrome c in the IMS and 4 protons from the mitochondrial matrix. This chain is Cytochrome c oxidase subunit 2 (MT-CO2), found in Tragelaphus imberbis (Lesser kudu).